Here is a 378-residue protein sequence, read N- to C-terminus: UDP-4-amino-4-deoxy-L-arabinose--oxoglutarate aminotransferase (378 aa).

Residue lysine 182 is modified to N6-(pyridoxal phosphate)lysine.

The protein belongs to the DegT/DnrJ/EryC1 family. ArnB subfamily. In terms of assembly, homodimer. Pyridoxal 5'-phosphate serves as cofactor.

It catalyses the reaction UDP-4-amino-4-deoxy-beta-L-arabinose + 2-oxoglutarate = UDP-beta-L-threo-pentopyranos-4-ulose + L-glutamate. Its pathway is nucleotide-sugar biosynthesis; UDP-4-deoxy-4-formamido-beta-L-arabinose biosynthesis; UDP-4-deoxy-4-formamido-beta-L-arabinose from UDP-alpha-D-glucuronate: step 2/3. It participates in bacterial outer membrane biogenesis; lipopolysaccharide biosynthesis. In terms of biological role, catalyzes the conversion of UDP-4-keto-arabinose (UDP-Ara4O) to UDP-4-amino-4-deoxy-L-arabinose (UDP-L-Ara4N). The modified arabinose is attached to lipid A and is required for resistance to polymyxin and cationic antimicrobial peptides. The polypeptide is UDP-4-amino-4-deoxy-L-arabinose--oxoglutarate aminotransferase (Aeromonas hydrophila subsp. hydrophila (strain ATCC 7966 / DSM 30187 / BCRC 13018 / CCUG 14551 / JCM 1027 / KCTC 2358 / NCIMB 9240 / NCTC 8049)).